We begin with the raw amino-acid sequence, 497 residues long: E3 ubiquitin-protein ligase CBL-C (497 aa).

A 4H region spans residues 7–145 (PQGWQWGEPR…SALFPEGKYC (139 aa)). One can recognise a Cbl-PTB domain in the interval 7-321 (PQGWQWGEPR…GKNHNPDLTE (315 aa)). The EF-hand-like stretch occupies residues 146–218 (GHLYQITKGS…FEFDIFTRLF (73 aa)). The Ca(2+) site is built by D199, T201, and E210. The interval 219–321 (QPWPTLLKNW…GKNHNPDLTE (103 aa)) is SH2-like. Residue R264 coordinates 4-O-phospho-L-tyrosine. Residues 322–350 (LCRAVLNQCIQVSQEQLQLYQAMNSTFEL) are linker. Position 341 is a phosphotyrosine; by SRC (Y341). Residues 351–390 (CKICTERDKDVRIEPCGHLLCSCCLAAWQHSDSQTCPFCR) form an RING-type zinc finger. The segment at 351–497 (CKICTERDKD…QVREGATESS (147 aa)) is interaction with RET.

Interacts with Ubiquitin-conjugating enzyme E2 UBE2D2 and UBE2D3. Interacts with EGFR (tyrosine phosphorylated). Interacts with the SH3 domain proteins LYN and CRK. Interacts (via RING-type zinc finger) with TGFB1I1 (via LIM zinc-binding domain 2); the interaction is direct and enhances the E3 activity. Interacts directly with RET (inactive) and CD2AP; dissociates from RET upon RET activation by GDNF which also increases the interaction with CD2AP suggesting dissociation as CBLC:CD2AP complex. Interacts with SRC; the interaction is enhanced when SRC is phosphorylated at 'Tyr-419'. In terms of processing, phosphorylated on multiple tyrosine residues by SRC. Autoubiquitinated, when phosphorylated at Tyr-341.

It carries out the reaction S-ubiquitinyl-[E2 ubiquitin-conjugating enzyme]-L-cysteine + [acceptor protein]-L-lysine = [E2 ubiquitin-conjugating enzyme]-L-cysteine + N(6)-ubiquitinyl-[acceptor protein]-L-lysine.. Its activity is regulated as follows. Phosphorylation at Tyr-341 is necessary and sufficient for the activation of E3 activity. In terms of biological role, acts as an E3 ubiquitin-protein ligase, which accepts ubiquitin from specific E2 ubiquitin-conjugating enzymes, and then transfers it to substrates promoting their degradation by the proteasome. Functionally coupled with the E2 ubiquitin-protein ligases UB2D1, UB2D2 and UB2D3. Regulator of EGFR mediated signal transduction; upon EGF activation, ubiquitinates EGFR. Inhibits EGF stimulated MAPK1 activation. Promotes ubiquitination of SRC phosphorylated at 'Tyr-419', has the highest ubiquitin ligase activity among CBL family proteins. In collaboration with CD2AP may act as regulatory checkpoint for Ret signaling by modulating the rate of RET degradation after ligand activation; CD2AP converts it from an inhibitor to a promoter of RET degradation; the function limits the potency of GDNF on neuronal survival. The polypeptide is E3 ubiquitin-protein ligase CBL-C (Cblc) (Rattus norvegicus (Rat)).